A 163-amino-acid chain; its full sequence is Small ribosomal subunit protein uS9 (163 aa).

A compositionally biased stretch (low complexity) spans 1-25; sequence MAENTNNSAVTETEETTAAFTTETN. The disordered stretch occupies residues 1-40; it reads MAENTNNSAVTETEETTAAFTTETNSGAGTGTSTIAPGYG.

This sequence belongs to the universal ribosomal protein uS9 family.

In Bifidobacterium animalis subsp. lactis (strain AD011), this protein is Small ribosomal subunit protein uS9.